A 161-amino-acid polypeptide reads, in one-letter code: Nucleotide-binding protein Bphyt_3208 (161 aa).

Belongs to the YajQ family.

In terms of biological role, nucleotide-binding protein. The chain is Nucleotide-binding protein Bphyt_3208 from Paraburkholderia phytofirmans (strain DSM 17436 / LMG 22146 / PsJN) (Burkholderia phytofirmans).